Here is a 310-residue protein sequence, read N- to C-terminus: Oxygen-dependent coproporphyrinogen-III oxidase (310 aa).

Serine 97 serves as a coordination point for substrate. Histidine 101 and histidine 111 together coordinate a divalent metal cation. Histidine 111 acts as the Proton donor in catalysis. Residue 113-115 (NFR) participates in substrate binding. Positions 150 and 180 each coordinate a divalent metal cation. The tract at residues 245–280 (YVEFNLLYDRGTRFGLEFGGRTESILMSLPPRVVWR) is important for dimerization. Substrate is bound at residue 263–265 (GGR).

This sequence belongs to the aerobic coproporphyrinogen-III oxidase family. In terms of assembly, homodimer. The cofactor is a divalent metal cation.

It is found in the cytoplasm. The enzyme catalyses coproporphyrinogen III + O2 + 2 H(+) = protoporphyrinogen IX + 2 CO2 + 2 H2O. Its pathway is porphyrin-containing compound metabolism; protoporphyrin-IX biosynthesis; protoporphyrinogen-IX from coproporphyrinogen-III (O2 route): step 1/1. Involved in the heme biosynthesis. Catalyzes the aerobic oxidative decarboxylation of propionate groups of rings A and B of coproporphyrinogen-III to yield the vinyl groups in protoporphyrinogen-IX. This Coxiella burnetii (strain RSA 331 / Henzerling II) protein is Oxygen-dependent coproporphyrinogen-III oxidase.